The following is a 358-amino-acid chain: MNSFGIKFKISTFGESHGVAIGCLLDGVPAGLLIDEEFIQAELDRRKPGKSEFETARKEDDKVEILSGVFEGKSTGTPIAMIIYNTNQKSKDYSNIKDIFRPGHADFTYFHKYGLRDYRGGGRSSARETAARVAGGAVAKLMLKELGIEVQSGICEVDGIKSLEFDYESAKKSIIYALDSTKEEAQKEAILRAKNEHDSVGGVSRVLIKGVPVGLGQPLYYKMDAVLADAMMGINAVKAVEIGDGILSASLKGSINNDAIRADGFVTNHSGGILGGISNGEDIVMNVYFKPTPSIFKEQQTITCRDEEVDFSLKGRHDPCVAIRGTIVCEAMAALVIADMLLLNMGSEMSGVLTYYKK.

Arg46 serves as a coordination point for NADP(+). Residues 123 to 125 (RSS), 235 to 236 (NA), Gly275, 290 to 294 (KPTPS), and Arg316 each bind FMN.

This sequence belongs to the chorismate synthase family. Homotetramer. The cofactor is FMNH2.

The enzyme catalyses 5-O-(1-carboxyvinyl)-3-phosphoshikimate = chorismate + phosphate. It functions in the pathway metabolic intermediate biosynthesis; chorismate biosynthesis; chorismate from D-erythrose 4-phosphate and phosphoenolpyruvate: step 7/7. Catalyzes the anti-1,4-elimination of the C-3 phosphate and the C-6 proR hydrogen from 5-enolpyruvylshikimate-3-phosphate (EPSP) to yield chorismate, which is the branch point compound that serves as the starting substrate for the three terminal pathways of aromatic amino acid biosynthesis. This reaction introduces a second double bond into the aromatic ring system. This chain is Chorismate synthase, found in Sulfurimonas denitrificans (strain ATCC 33889 / DSM 1251) (Thiomicrospira denitrificans (strain ATCC 33889 / DSM 1251)).